Here is a 47-residue protein sequence, read N- to C-terminus: GIACLCDSDGPSVRGNTLSGTYWLAGCPSGWHNCKSSGQLIGACCKQ.

Intrachain disulfides connect Cys-4/Cys-44, Cys-6/Cys-34, and Cys-27/Cys-45.

The protein belongs to the sea anemone sodium channel inhibitory toxin family. Type I subfamily.

It is found in the secreted. The protein resides in the nematocyst. Its function is as follows. Produces a positive inotropic effect in mammalian heart muscle. Modifies current passing through the fast sodium channel (Nav) in neuroblastoma cells, leading to delayed and incomplete inactivation. Paralyzes the shore crab (C.maenas) by tetanic contractions after intramuscular injection. This Anthopleura elegantissima (Green aggregating anemone) protein is Delta-actitoxin-Ael1b.